A 420-amino-acid chain; its full sequence is 5'-deoxyadenosine deaminase (420 aa).

Zn(2+) is bound by residues histidine 55 and histidine 57. 2 residues coordinate substrate: glutamate 84 and histidine 176. Residue histidine 203 coordinates Zn(2+). Glutamate 206 and aspartate 292 together coordinate substrate. Aspartate 292 serves as a coordination point for Zn(2+).

This sequence belongs to the metallo-dependent hydrolases superfamily. MTA/SAH deaminase family. Homotetramer. Zn(2+) serves as cofactor.

The enzyme catalyses 5'-deoxyadenosine + H2O + H(+) = 5'-deoxyinosine + NH4(+). It catalyses the reaction S-adenosyl-L-homocysteine + H2O + H(+) = S-inosyl-L-homocysteine + NH4(+). It carries out the reaction S-methyl-5'-thioadenosine + H2O + H(+) = S-methyl-5'-thioinosine + NH4(+). The catalysed reaction is adenosine + H2O + H(+) = inosine + NH4(+). The protein operates within amino-acid biosynthesis; S-adenosyl-L-methionine biosynthesis. Its function is as follows. Catalyzes the deamination of three SAM-derived enzymatic products, namely 5'-deoxyadenosine, S-adenosyl-L-homocysteine, and 5'-methylthioadenosine, to produce the inosine analogs. Can also deaminate adenosine. The preferred substrate for this enzyme is 5'-deoxyadenosine, but all these substrates are efficiently deaminated. Likely functions in a S-adenosyl-L-methionine (SAM) recycling pathway from S-adenosyl-L-homocysteine (SAH) produced from SAM-dependent methylation reactions. May also be involved in the recycling of 5'-deoxyadenosine, whereupon the 5'-deoxyribose moiety of 5'-deoxyinosine is further metabolized to deoxyhexoses used for the biosynthesis of aromatic amino acids in methanogens. This is 5'-deoxyadenosine deaminase from Methanocaldococcus jannaschii (strain ATCC 43067 / DSM 2661 / JAL-1 / JCM 10045 / NBRC 100440) (Methanococcus jannaschii).